Here is a 745-residue protein sequence, read N- to C-terminus: 5-methyltetrahydropteroyltriglutamate--homocysteine methyltransferase (745 aa).

Residues 17–20 and lysine 111 contribute to the 5-methyltetrahydropteroyltri-L-glutamate site; that span reads RELK. L-homocysteine is bound by residues 421 to 423 and glutamate 474; that span reads IGS. L-methionine contacts are provided by residues 421–423 and glutamate 474; that span reads IGS. 5-methyltetrahydropteroyltri-L-glutamate contacts are provided by residues 505–506 and tryptophan 551; that span reads RC. Position 589 (aspartate 589) interacts with L-homocysteine. Aspartate 589 lines the L-methionine pocket. Glutamate 595 is a binding site for 5-methyltetrahydropteroyltri-L-glutamate. Histidine 631, cysteine 633, and glutamate 655 together coordinate Zn(2+). Histidine 684 functions as the Proton donor in the catalytic mechanism. Cysteine 716 serves as a coordination point for Zn(2+).

The protein belongs to the vitamin-B12 independent methionine synthase family. Requires Zn(2+) as cofactor.

It carries out the reaction 5-methyltetrahydropteroyltri-L-glutamate + L-homocysteine = tetrahydropteroyltri-L-glutamate + L-methionine. It functions in the pathway amino-acid biosynthesis; L-methionine biosynthesis via de novo pathway; L-methionine from L-homocysteine (MetE route): step 1/1. Its function is as follows. Catalyzes the transfer of a methyl group from 5-methyltetrahydrofolate to homocysteine resulting in methionine formation. The chain is 5-methyltetrahydropteroyltriglutamate--homocysteine methyltransferase from Thermodesulfovibrio yellowstonii (strain ATCC 51303 / DSM 11347 / YP87).